The chain runs to 681 residues: DNA ligase (681 aa).

Residues 44-48, 94-95, and Glu-124 each bind NAD(+); these read DYIYD and SL. The active-site N6-AMP-lysine intermediate is the Lys-126. 4 residues coordinate NAD(+): Arg-147, Glu-181, Lys-297, and Lys-321. Zn(2+) contacts are provided by Cys-415, Cys-418, Cys-433, and Cys-438. A BRCT domain is found at 598–681; the sequence is DETSFFYGKK…EAQAKEGTDK (84 aa).

Belongs to the NAD-dependent DNA ligase family. LigA subfamily. The cofactor is Mg(2+). It depends on Mn(2+) as a cofactor.

The enzyme catalyses NAD(+) + (deoxyribonucleotide)n-3'-hydroxyl + 5'-phospho-(deoxyribonucleotide)m = (deoxyribonucleotide)n+m + AMP + beta-nicotinamide D-nucleotide.. Functionally, DNA ligase that catalyzes the formation of phosphodiester linkages between 5'-phosphoryl and 3'-hydroxyl groups in double-stranded DNA using NAD as a coenzyme and as the energy source for the reaction. It is essential for DNA replication and repair of damaged DNA. The polypeptide is DNA ligase (Leuconostoc citreum (strain KM20)).